We begin with the raw amino-acid sequence, 235 residues long: MSVISMKQLLEAGVHFGHQTRRWNPKMKKYIFTERNGIYIIDLQKTVKKMEEAYNFVKELAANGGKILFVGTKKQAQESVKEEAERCGMFYVNQRWLGGTLTNFATIQKRIKRLKEIEKMAEDGTFDVLPKKEVIRIKKEQERLEKFLGGIKEMKELPDALFVIDPRKERIAVAEARKLNIPIIGIVDTNCDPDEIDYVIPANDDAIRAVKLLTSKIADAVLEAKQGEEAVVAAE.

It belongs to the universal ribosomal protein uS2 family.

The protein is Small ribosomal subunit protein uS2 of Geobacillus sp. (strain WCH70).